A 245-amino-acid polypeptide reads, in one-letter code: Probable transcriptional regulatory protein pc1328 (245 aa).

This sequence belongs to the TACO1 family.

The protein resides in the cytoplasm. In Protochlamydia amoebophila (strain UWE25), this protein is Probable transcriptional regulatory protein pc1328.